A 208-amino-acid polypeptide reads, in one-letter code: Small ribosomal subunit protein uS4A (208 aa).

Residues leucine 98 to leucine 161 enclose the S4 RNA-binding domain.

It belongs to the universal ribosomal protein uS4 family. Part of the 30S ribosomal subunit. Contacts protein S5. The interaction surface between S4 and S5 is involved in control of translational fidelity.

Functionally, one of the primary rRNA binding proteins, it binds directly to 16S rRNA where it nucleates assembly of the body of the 30S subunit. Its function is as follows. With S5 and S12 plays an important role in translational accuracy. The chain is Small ribosomal subunit protein uS4A from Myxococcus xanthus (strain DK1622).